The sequence spans 307 residues: ATP synthase gamma chain (307 aa).

This sequence belongs to the ATPase gamma chain family. As to quaternary structure, F-type ATPases have 2 components, CF(1) - the catalytic core - and CF(0) - the membrane proton channel. CF(1) has five subunits: alpha(3), beta(3), gamma(1), delta(1), epsilon(1). CF(0) has three main subunits: a, b and c.

The protein localises to the cell membrane. Produces ATP from ADP in the presence of a proton gradient across the membrane. The gamma chain is believed to be important in regulating ATPase activity and the flow of protons through the CF(0) complex. This is ATP synthase gamma chain from Mycolicibacterium smegmatis (strain ATCC 700084 / mc(2)155) (Mycobacterium smegmatis).